The following is a 589-amino-acid chain: MASEIHMSEPMCLIENTEAQLVINQEALRILSAITQPVVVVAIVGLYRTGKSYLMNKLAGKRTGFSLGSTVQSHTKGIWMWCVPHPKKAGQTLVLLDTEGLEDVEKGDNQNDCWIFALAVLLSSTFIYNSIGTINQQAMDQLHYVTELTDLIKSKSSPDQSDVDNSANFVGFFPIFVWTLRDFSLDLEFDGESITPDEYLETSLALRKGTDENTKKFNMPRLCIRKFFPKRKCFIFDRPGDRKQLSKLEWIQEDQLNKEFVEQVAEFTSYIFSYSGVKTLSGGITVNGPRLKSLVQTYVSAICSGELPCMENAVLTLAQIENSAAVQKAITYYEEQMNQKIHMPTETLQELLDLHRTCEREAIEVFMKNSFKDVDQKFQEELGAQLEAKRDAFVKKNMDMSSAHCSDLLEGLFAHLEEEVKQGTFYKPGGYYLFLQRKQELEKKYIQTPGKGLQAEVMLRKYFESKEDLADTLLKMDQSLTEKEKQIEMERIKAEAAEAANRALAEMQKKHEMLMEQKEQSYQEHMKQLTEKMEQERKELMAEQQRIISLKLQEQERLLKQGFQNESLQLRQEIEKIKNMPPPRSCTIL.

The GTPase domain (Globular) stretch occupies residues 1 to 309 (MASEIHMSEP…SAICSGELPC (309 aa)). A GB1/RHD3-type G domain is found at 35–276 (TQPVVVVAIV…FTSYIFSYSG (242 aa)). GTP is bound by residues 47 to 53 (YRTGKSY), 67 to 69 (LGS), and 97 to 101 (DTEGL). A Phosphoserine modification is found at Ser156. Cys586 carries the cysteine methyl ester modification. The S-farnesyl cysteine moiety is linked to residue Cys586. Cys586 is lipidated: S-geranylgeranyl cysteine; partial. Thr587 carries the phosphothreonine modification. Positions 587–589 (TIL) are cleaved as a propeptide — removed in mature form.

The protein belongs to the TRAFAC class dynamin-like GTPase superfamily. GB1/RHD3 GTPase family. GB1 subfamily. In terms of assembly, homodimer; homodimerization occurs upon GTP-binding and is required for the second hydrolysis step from GDP to GMP. Undergoes conformational changes and oligomerization upon GTP-binding and hydrolysis. Heterodimer with other family members, including GBP2, GBP3, GBP4 and GBP5. Dimerization regulates subcellular location to membranous structures. Interacts with SQSTM1. Interacts (when phosphorylated) with 14-3-3 protein sigma (SFN); leading to GBP1 retention in the cytosol and inactivation. Isoprenylation of mouse GBP1 is incomplete. It persistently exists in the cell as a mixture of C20-modified and (more predominantly) unmodified form. Isoprenylation is required for proper subcellular location. In terms of processing, phosphorylated at Ser-156 by PIM1 in absence of infection, inhibits GBP1: phosphorylation promotes interaction with 14-3-3 protein sigma (SFN), leading to GBP1 retention in the cytosol. Dephosphorylated in response to infection, liberating GBP1.

It is found in the cytoplasmic vesicle membrane. The protein resides in the golgi apparatus membrane. Its subcellular location is the cell membrane. It localises to the cytoplasm. The protein localises to the cytosol. It is found in the secreted. It catalyses the reaction GTP + H2O = GDP + phosphate + H(+). The enzyme catalyses GDP + H2O = GMP + phosphate + H(+). Its function is as follows. Interferon (IFN)-inducible GTPase that plays important roles in innate immunity against a diverse range of bacterial, viral and protozoan pathogens. Hydrolyzes GTP to GMP in two consecutive cleavage reactions: GTP is first hydrolyzed to GDP and then to GMP in a processive manner. Following infection, recruited to the pathogen-containing vacuoles or vacuole-escaped bacteria and promotes both inflammasome assembly and autophagy. Acts as a positive regulator of inflammasome assembly by facilitating the detection of inflammasome ligands from pathogens. Involved in the lysis of pathogen-containing vacuoles, releasing pathogens into the cytosol. Following pathogen release in the cytosol, forms a protein coat in a GTPase-dependent manner that encapsulates pathogens and promotes the detection of ligands by pattern recognition receptors. Plays a key role in inflammasome assembly in response to infection by Gram-negative bacteria: following pathogen release in the cytosol, forms a protein coat that encapsulates Gram-negative bacteria and directly binds to lipopolysaccharide (LPS), disrupting the O-antigen barrier and unmasking lipid A that is that detected by the non-canonical inflammasome effector CASP4/CASP11. Also promotes recruitment of proteins that mediate bacterial cytolysis, leading to release double-stranded DNA (dsDNA) that activates the AIM2 inflammasome. Involved in autophagy by regulating bacteriolytic peptide generation via its interaction with ubiquitin-binding protein SQSTM1, which delivers monoubiquitinated proteins to autolysosomes for the generation of bacteriolytic peptides. Confers protection to several pathogens, including the bacterial pathogens L.monocytogenes and M.bovis BCG as well as the protozoan pathogen T.gondii. Exhibits antiviral activity against influenza virus. The polypeptide is Guanylate-binding protein 1 (Gbp1) (Mus musculus (Mouse)).